Consider the following 685-residue polypeptide: Probable serine/threonine-protein kinase CPE1738 (685 aa).

The region spanning tyrosine 10–valine 275 is the Protein kinase domain. ATP-binding positions include valine 16 to valine 24 and lysine 39. The Proton acceptor role is filled by glutamate 143. The interval isoleucine 277–isoleucine 339 is disordered. The span at glutamate 306–asparagine 329 shows a compositional bias: acidic residues. 4 consecutive PASTA domains span residues glycine 376–glycine 440, glycine 441–lysine 508, lysine 513–tyrosine 581, and glutamate 589–glutamate 648. The tract at residues valine 480–serine 500 is disordered. The interval aspartate 623–asparagine 685 is disordered. Low complexity-rich tracts occupy residues valine 627–threonine 645 and glutamine 654–asparagine 685.

Belongs to the protein kinase superfamily. Ser/Thr protein kinase family.

The catalysed reaction is L-seryl-[protein] + ATP = O-phospho-L-seryl-[protein] + ADP + H(+). The enzyme catalyses L-threonyl-[protein] + ATP = O-phospho-L-threonyl-[protein] + ADP + H(+). The chain is Probable serine/threonine-protein kinase CPE1738 from Clostridium perfringens (strain 13 / Type A).